Consider the following 92-residue polypeptide: MARSVWKGPFVDGYLLKKAEKVREGGRSEVIKIWSRRSTILPQFVGLTFGVYNGSKHIPVSVNEDMVGHKFGEFSPTRTYYGHGADKKAKRK.

This sequence belongs to the universal ribosomal protein uS19 family.

In terms of biological role, protein S19 forms a complex with S13 that binds strongly to the 16S ribosomal RNA. The protein is Small ribosomal subunit protein uS19 of Rhizobium johnstonii (strain DSM 114642 / LMG 32736 / 3841) (Rhizobium leguminosarum bv. viciae).